The chain runs to 198 residues: GTP cyclohydrolase-2 (198 aa).

Residue 52–56 (RMHSE) participates in GTP binding. Positions 57, 68, and 70 each coordinate Zn(2+). Residues glutamine 73, 94-96 (EGR), and threonine 116 contribute to the GTP site. Aspartate 128 (proton acceptor) is an active-site residue. Arginine 130 acts as the Nucleophile in catalysis. 2 residues coordinate GTP: threonine 151 and lysine 156.

Belongs to the GTP cyclohydrolase II family. Zn(2+) serves as cofactor.

It catalyses the reaction GTP + 4 H2O = 2,5-diamino-6-hydroxy-4-(5-phosphoribosylamino)-pyrimidine + formate + 2 phosphate + 3 H(+). It participates in cofactor biosynthesis; riboflavin biosynthesis; 5-amino-6-(D-ribitylamino)uracil from GTP: step 1/4. Functionally, catalyzes the conversion of GTP to 2,5-diamino-6-ribosylamino-4(3H)-pyrimidinone 5'-phosphate (DARP), formate and pyrophosphate. The polypeptide is GTP cyclohydrolase-2 (Vibrio cholerae serotype O1 (strain ATCC 39315 / El Tor Inaba N16961)).